The primary structure comprises 281 residues: Fructose-bisphosphate aldolase class 1 (281 aa).

Lys191 serves as the catalytic Schiff-base intermediate with dihydroxyacetone-P.

It belongs to the DeoC/FbaB aldolase family. In terms of assembly, homooctamer.

Its subcellular location is the cytoplasm. It carries out the reaction beta-D-fructose 1,6-bisphosphate = D-glyceraldehyde 3-phosphate + dihydroxyacetone phosphate. Its activity is regulated as follows. Activated by citrate. The sequence is that of Fructose-bisphosphate aldolase class 1 (fba) from Pyrococcus furiosus (strain ATCC 43587 / DSM 3638 / JCM 8422 / Vc1).